An 88-amino-acid chain; its full sequence is Phosphocarrier protein HPr (88 aa).

The HPr domain maps to 1–88 (MAEKTFKVVS…DTLAKEGLAE (88 aa)). The residue at position 12 (serine 12) is a Phosphoserine. Histidine 15 (pros-phosphohistidine intermediate) is an active-site residue. Serine 46 bears the Phosphoserine; by HPrK/P mark.

Belongs to the HPr family.

The protein resides in the cytoplasm. With respect to regulation, phosphorylation on Ser-46 inhibits the phosphoryl transfer from enzyme I to HPr. Its function is as follows. General (non sugar-specific) component of the phosphoenolpyruvate-dependent sugar phosphotransferase system (sugar PTS). This major carbohydrate active-transport system catalyzes the phosphorylation of incoming sugar substrates concomitantly with their translocation across the cell membrane. The phosphoryl group from phosphoenolpyruvate (PEP) is transferred to the phosphoryl carrier protein HPr by enzyme I. Phospho-HPr then transfers it to the PTS EIIA domain. In terms of biological role, P-Ser-HPr interacts with the catabolite control protein A (CcpA), forming a complex that binds to DNA at the catabolite response elements cre, operator sites preceding a large number of catabolite-regulated genes. Thus, P-Ser-HPr is a corepressor in carbon catabolite repression (CCR), a mechanism that allows bacteria to coordinate and optimize the utilization of available carbon sources. P-Ser-HPr also plays a role in inducer exclusion, in which it probably interacts with several non-PTS permeases and inhibits their transport activity. This is Phosphocarrier protein HPr (ptsH) from Geobacillus stearothermophilus (Bacillus stearothermophilus).